Here is a 366-residue protein sequence, read N- to C-terminus: tRNA/tmRNA (uracil-C(5))-methyltransferase (366 aa).

The S-adenosyl-L-methionine site is built by Gln-190, Tyr-218, Asn-223, Glu-239, and Asp-299. The active-site Nucleophile is Cys-324. Glu-358 serves as the catalytic Proton acceptor.

The protein belongs to the class I-like SAM-binding methyltransferase superfamily. RNA M5U methyltransferase family. TrmA subfamily.

It catalyses the reaction uridine(54) in tRNA + S-adenosyl-L-methionine = 5-methyluridine(54) in tRNA + S-adenosyl-L-homocysteine + H(+). The catalysed reaction is uridine(341) in tmRNA + S-adenosyl-L-methionine = 5-methyluridine(341) in tmRNA + S-adenosyl-L-homocysteine + H(+). Its function is as follows. Dual-specificity methyltransferase that catalyzes the formation of 5-methyluridine at position 54 (m5U54) in all tRNAs, and that of position 341 (m5U341) in tmRNA (transfer-mRNA). The polypeptide is tRNA/tmRNA (uracil-C(5))-methyltransferase (Escherichia coli (strain UTI89 / UPEC)).